The primary structure comprises 672 residues: Acetyl-coenzyme A synthetase (672 aa).

Residues 217–220 and threonine 335 contribute to the CoA site; that span reads RRGK. ATP contacts are provided by residues 411–413, 435–440, aspartate 529, arginine 544, and arginine 555; these read GEP and DTWWQT. Valine 566, histidine 568, and isoleucine 571 together coordinate Mg(2+). CoA is bound at residue arginine 613. N6-acetyllysine is present on lysine 638.

The protein belongs to the ATP-dependent AMP-binding enzyme family. Mg(2+) serves as cofactor. In terms of processing, acetylated. Deacetylation by the SIR2-homolog deacetylase activates the enzyme. The N-terminus is blocked.

The catalysed reaction is acetate + ATP + CoA = acetyl-CoA + AMP + diphosphate. Functionally, catalyzes the conversion of acetate into acetyl-CoA (AcCoA), an essential intermediate at the junction of anabolic and catabolic pathways. AcsA undergoes a two-step reaction. In the first half reaction, AcsA combines acetate with ATP to form acetyl-adenylate (AcAMP) intermediate. In the second half reaction, it can then transfer the acetyl group from AcAMP to the sulfhydryl group of CoA, forming the product AcCoA. This is Acetyl-coenzyme A synthetase from Methanothrix soehngenii (Methanosaeta concilii).